We begin with the raw amino-acid sequence, 474 residues long: Dihydrolipoyl dehydrogenase (474 aa).

Residues 36–45, K54, and G117 contribute to the FAD site; that span reads ERYNTLGGVC. C45 and C50 are oxidised to a cystine. NAD(+) is bound by residues 182-186 and E205; that span reads GGGII. K220 carries the post-translational modification N6-acetyllysine. NAD(+) is bound by residues V238 and 270 to 273; that span reads AIGR. FAD contacts are provided by D313 and A321. The active-site Proton acceptor is the H445.

The protein belongs to the class-I pyridine nucleotide-disulfide oxidoreductase family. As to quaternary structure, homodimer. The cofactor is FAD.

The protein resides in the cytoplasm. It catalyses the reaction N(6)-[(R)-dihydrolipoyl]-L-lysyl-[protein] + NAD(+) = N(6)-[(R)-lipoyl]-L-lysyl-[protein] + NADH + H(+). Its function is as follows. Lipoamide dehydrogenase is a component of the glycine cleavage system as well as of the alpha-ketoacid dehydrogenase complexes. This chain is Dihydrolipoyl dehydrogenase (lpdA), found in Shigella flexneri.